An 817-amino-acid polypeptide reads, in one-letter code: MNSIPVLTLLGVTALLPCVPALTCQKSSAQAVRNVAELPLRWWGAGEKTCEVSEGCQDLIMLLYNGPKVNLVIIKGCTEVEDQEPKVIWLRTGPGLSVVSYTRVCRHGDLCNDVNSTKILEELPTPTVPGSLRCPLCLSNDSCENAPEQVCPVGSTHCYDGVLRLRGDGIRTNLKVQGCMAQPDCNLLNGTQAIGTLYMSENCDLIGPQALDCNSGSLETVRNVSDLHLSWTTGWQTCEAGEGCYETVMLIQNGHEFHMVLTKGCTRDMNKKARLTRHRTGPGISIVSYVHVCRDRDFCNDLSTTDPLWTPPPDTELGTLRCRHCLSTGSCVSASELVCPAGSTHCYSGVLSLRGGGVISDLKVQGCISQSQPGCNLLNGTQTIGPVDVREDCGLQLDALKCQHGTLKTIQDISKLPLQWTAGQKICNVGEGCQDTLMLIENGEQVNLVLTKGCTTAKDQEAKVTEHRTGPGLSVTSYTRVCRKKDFCNDLSTTAPLWAPPPVTAPGTTRCPLCFSEQACENAPEQVCPAGSTHCYSGVLSLRGGGIISDLKVQGCMSQPGCNLLNGTQTIGPVDVSERCSPPSETTELSCYRGVMFELGNGFAEEPVKWTAPGSQVCAPDEICQETLLLIDVGQKSAFLGSKGCSSPGAQDNIGVSIFSRLPGMLVASYTKFCSSHLCNGADSSSVLLSILPRPDVPPPGDVQCPMCVELFGSCKSTDSVTCPRGATHCYKGDIALQGGGLTTRVSIQGCMAPPIKPLLGDSKTIGIFSAEESSNYRHEDDVTSAPSLAWTLRLSAWMLGLSALLSSLYAGICPLC.

Residues 1–21 (MNSIPVLTLLGVTALLPCVPA) form the signal peptide. Over 22-796 (LTCQKSSAQA…PSLAWTLRLS (775 aa)) the chain is Extracellular. N-linked (GlcNAc...) asparagine glycosylation is found at Asn-115, Asn-189, Asn-379, and Asn-566. UPAR/Ly6 domains lie at 134-203 (CPLC…SENC), 322-393 (CRHC…REDC), 511-581 (CPLC…ERCS), and 705-774 (CPMC…AEES). Residues 797–817 (AWMLGLSALLSSLYAGICPLC) form a helical; Anchor for type IV membrane protein membrane-spanning segment.

Found in a complex with integrin ITGAM/CD11b and ITGB2/CD18. Interacts with PECAM1 (via Ig-like C2-type domain 6); the interaction is Ca(2+)-dependent; the interaction is direct. Interacts with serine protease PRTN3/myeloblastin; the interaction tethers PRTN3 to the cell surface; the interaction is direct. As to expression, expressed in neutrophils.

It is found in the cell membrane. Functionally, in association with beta-2 integrin heterodimer ITGAM/CD11b and ITGB2/CD18, mediates activation of TNF-alpha primed neutrophils including degranulation and superoxide production. In addition, by preventing beta-2 integrin internalization and attenuating chemokine signaling favors adhesion over migration. Heterophilic interaction with PECAM1 on endothelial cells plays a role in neutrophil transendothelial migration in vitro. However, appears to be dispensable for neutrophil recruitment caused by bacterial infection in vivo. Acts as a receptor for the mature form of protease PRTN3 allowing its display at the cell surface of neutrophils. By displaying PRTN3 at the neutrophil cell surface, may play a role in enhancing endothelial cell junctional integrity and thus vascular integrity during neutrophil diapedesis. In Mus musculus (Mouse), this protein is CD177 antigen (Cd177).